The chain runs to 240 residues: Ubiquinone biosynthesis O-methyltransferase (240 aa).

Residues R44, G64, D85, and M129 each coordinate S-adenosyl-L-methionine.

This sequence belongs to the methyltransferase superfamily. UbiG/COQ3 family.

It catalyses the reaction a 3-demethylubiquinol + S-adenosyl-L-methionine = a ubiquinol + S-adenosyl-L-homocysteine + H(+). It carries out the reaction a 3-(all-trans-polyprenyl)benzene-1,2-diol + S-adenosyl-L-methionine = a 2-methoxy-6-(all-trans-polyprenyl)phenol + S-adenosyl-L-homocysteine + H(+). It participates in cofactor biosynthesis; ubiquinone biosynthesis. Functionally, O-methyltransferase that catalyzes the 2 O-methylation steps in the ubiquinone biosynthetic pathway. The protein is Ubiquinone biosynthesis O-methyltransferase of Escherichia coli O6:K15:H31 (strain 536 / UPEC).